The following is a 229-amino-acid chain: Triosephosphate isomerase (229 aa).

A substrate-binding site is contributed by 9 to 11 (NLK). His93 functions as the Electrophile in the catalytic mechanism. Glu141 (proton acceptor) is an active-site residue. Substrate is bound by residues Ile146, Gly181, and 202-203 (AS).

The protein belongs to the triosephosphate isomerase family. Homotetramer; dimer of dimers.

The protein localises to the cytoplasm. It carries out the reaction D-glyceraldehyde 3-phosphate = dihydroxyacetone phosphate. It functions in the pathway carbohydrate biosynthesis; gluconeogenesis. It participates in carbohydrate degradation; glycolysis; D-glyceraldehyde 3-phosphate from glycerone phosphate: step 1/1. In terms of biological role, involved in the gluconeogenesis. Catalyzes stereospecifically the conversion of dihydroxyacetone phosphate (DHAP) to D-glyceraldehyde-3-phosphate (G3P). The polypeptide is Triosephosphate isomerase (Pyrobaculum islandicum (strain DSM 4184 / JCM 9189 / GEO3)).